A 519-amino-acid chain; its full sequence is Probable pectinesterase/pectinesterase inhibitor 36 (519 aa).

A signal peptide spans 1 to 25; the sequence is MSTFVKVTDLITIMFFLAIAAVITA. The interval 27 to 141 is pectinesterase inhibitor 36; the sequence is NTAELDVLEM…TFVLHEALAF (115 aa). N-linked (GlcNAc...) asparagine glycans are attached at residues asparagine 92 and asparagine 130. Residues 147 to 196 are disordered; it reads GHMKKRLHGPARQGHGPTRPKHRPTRPNHGPGRSHHGPSRPNQNGGMLVS. Basic residues predominate over residues 164 to 184; it reads TRPKHRPTRPNHGPGRSHHGP. Over residues 186 to 196 the composition is skewed to polar residues; it reads RPNQNGGMLVS. Residues 205–505 form a pectinesterase 36 region; it reads DFVVARDGSA…FTVSRFIQGD (301 aa). 2 residues coordinate substrate: threonine 283 and glutamine 313. The active-site Proton donor; for pectinesterase activity is aspartate 336. Aspartate 357 serves as the catalytic Nucleophile; for pectinesterase activity. Residues arginine 425 and tryptophan 427 each coordinate substrate.

The protein in the N-terminal section; belongs to the PMEI family. This sequence in the C-terminal section; belongs to the pectinesterase family. In terms of tissue distribution, expressed in siliques.

The protein resides in the secreted. It is found in the cell wall. It carries out the reaction [(1-&gt;4)-alpha-D-galacturonosyl methyl ester](n) + n H2O = [(1-&gt;4)-alpha-D-galacturonosyl](n) + n methanol + n H(+). Its pathway is glycan metabolism; pectin degradation; 2-dehydro-3-deoxy-D-gluconate from pectin: step 1/5. Its function is as follows. Acts in the modification of cell walls via demethylesterification of cell wall pectin. This chain is Probable pectinesterase/pectinesterase inhibitor 36 (PME36), found in Arabidopsis thaliana (Mouse-ear cress).